The following is a 164-amino-acid chain: Urease subunit beta (164 aa).

2 stretches are compositionally biased toward polar residues: residues 1-10 (MSTKTNSTKA) and 20-30 (TNRGTKSSAGY). The segment at 1-30 (MSTKTNSTKATSEKTDSLKTNRGTKSSAGY) is disordered.

The protein belongs to the urease beta subunit family. In terms of assembly, heterotrimer of UreA (gamma), UreB (beta) and UreC (alpha) subunits. Three heterotrimers associate to form the active enzyme.

The protein localises to the cytoplasm. The enzyme catalyses urea + 2 H2O + H(+) = hydrogencarbonate + 2 NH4(+). Its pathway is nitrogen metabolism; urea degradation; CO(2) and NH(3) from urea (urease route): step 1/1. Expression of the urease operon increases the likelihood of bacterial survival by contributing to acid resistance in vitro and in vivo in BALB/c mice. Y.enterocolitica enters the body via an oral path and must survive the acidic stomach before being able to colonize the intestinal mucosa. This Yersinia enterocolitica protein is Urease subunit beta.